We begin with the raw amino-acid sequence, 323 residues long: ATP synthase gamma chain (323 aa).

This sequence belongs to the ATPase gamma chain family. In terms of assembly, F-type ATPases have 2 components, CF(1) - the catalytic core - and CF(0) - the membrane proton channel. CF(1) has five subunits: alpha(3), beta(3), gamma(1), delta(1), epsilon(1). CF(0) has three main subunits: a, b and c.

It localises to the cell inner membrane. Produces ATP from ADP in the presence of a proton gradient across the membrane. The gamma chain is believed to be important in regulating ATPase activity and the flow of protons through the CF(0) complex. The protein is ATP synthase gamma chain of Rickettsia africae (strain ESF-5).